Reading from the N-terminus, the 144-residue chain is Superoxide dismutase [Mn], mitochondrial (144 aa).

The Mn(2+) site is built by His10, His58, and Asp143.

The protein belongs to the iron/manganese superoxide dismutase family. In terms of assembly, homotetramer. Mn(2+) serves as cofactor.

It localises to the mitochondrion matrix. It catalyses the reaction 2 superoxide + 2 H(+) = H2O2 + O2. Its function is as follows. Destroys superoxide anion radicals which are normally produced within the cells and which are toxic to biological systems. This is Superoxide dismutase [Mn], mitochondrial from Branchiostoma floridae (Florida lancelet).